The following is a 351-amino-acid chain: Flagellin (351 aa).

Belongs to the bacterial flagellin family.

It is found in the secreted. It localises to the bacterial flagellum. Functionally, flagellin is the subunit protein which polymerizes to form the filaments of bacterial flagella. The protein is Flagellin (fliC) of Serratia marcescens.